A 331-amino-acid polypeptide reads, in one-letter code: MLEHGGRLREAARRYDIPLADWLDLSTGIAPWPFSLPAIPEQAWTRLPESDDGLEAAACLYYGAERVLPLAGSQAAIQALPRMRRGGRVGVLSPCYAEHAHAWRQAGHLVREIGEAEVEPYLDSLDVLLVVNPNNPTGRVFEPAELLAWHARLQRRGGWLLVDEAFMDCTPQSSLAACSNRPGLIVLRSFGKFFGLAGARLGFALGERPLLQALAEQLGPWTVNGPVRHVAQSALRDRQQQRQQRERLLAASQRLEELLRRHGWPPAGGSALFQRLVDPRCAALHDYLARRGILTRQFEQPASLRLGLPADEAAWARLDAALLGFKEPAHE.

K192 carries the post-translational modification N6-(pyridoxal phosphate)lysine.

The protein belongs to the class-I pyridoxal-phosphate-dependent aminotransferase family. In terms of assembly, homodimer. The cofactor is pyridoxal 5'-phosphate.

It is found in the cytoplasm. The enzyme catalyses O-phospho-L-threonine + H(+) = (R)-1-aminopropan-2-yl phosphate + CO2. The protein operates within cofactor biosynthesis; adenosylcobalamin biosynthesis. Its function is as follows. Decarboxylates L-threonine-O-3-phosphate to yield (R)-1-amino-2-propanol O-2-phosphate, the precursor for the linkage between the nucleotide loop and the corrin ring in cobalamin. In Pseudomonas aeruginosa (strain ATCC 15692 / DSM 22644 / CIP 104116 / JCM 14847 / LMG 12228 / 1C / PRS 101 / PAO1), this protein is Threonine-phosphate decarboxylase (cobC).